Here is a 125-residue protein sequence, read N- to C-terminus: Fluoride-specific ion channel FluC (125 aa).

4 helical membrane-spanning segments follow: residues 1–21 (MIQA…RYYV), 32–52 (AFPW…GVFA), 68–88 (LLIT…LDAI), and 101–121 (IYIA…LAVM). Residues G75 and T78 each coordinate Na(+).

This sequence belongs to the fluoride channel Fluc/FEX (TC 1.A.43) family.

The protein localises to the cell inner membrane. It carries out the reaction fluoride(in) = fluoride(out). With respect to regulation, na(+) is not transported, but it plays an essential structural role and its presence is essential for fluoride channel function. Fluoride-specific ion channel. Important for reducing fluoride concentration in the cell, thus reducing its toxicity. This is Fluoride-specific ion channel FluC from Rhizobium johnstonii (strain DSM 114642 / LMG 32736 / 3841) (Rhizobium leguminosarum bv. viciae).